The following is a 418-amino-acid chain: Glutamyl-tRNA reductase (418 aa).

Substrate-binding positions include 49–52 (TCNR), serine 109, 114–116 (EPQ), and glutamine 120. Cysteine 50 serves as the catalytic Nucleophile. 189 to 194 (GAGETI) is an NADP(+) binding site.

It belongs to the glutamyl-tRNA reductase family. Homodimer.

It catalyses the reaction (S)-4-amino-5-oxopentanoate + tRNA(Glu) + NADP(+) = L-glutamyl-tRNA(Glu) + NADPH + H(+). It functions in the pathway porphyrin-containing compound metabolism; protoporphyrin-IX biosynthesis; 5-aminolevulinate from L-glutamyl-tRNA(Glu): step 1/2. Its function is as follows. Catalyzes the NADPH-dependent reduction of glutamyl-tRNA(Glu) to glutamate 1-semialdehyde (GSA). In Escherichia coli O7:K1 (strain IAI39 / ExPEC), this protein is Glutamyl-tRNA reductase.